We begin with the raw amino-acid sequence, 827 residues long: Zinc phosphodiesterase ELAC protein 2 (827 aa).

A mitochondrion-targeting transit peptide spans 1-16; that stretch reads MWALRSLLRPLGLRTM. Disordered stretches follow at residues 15–46 and 181–220; these read TMSQ…GWGP and SERR…QCLP. The span at 181-192 shows a compositional bias: basic and acidic residues; sequence SERRCGEQEPSR. 6 positions are modified to phosphoserine: Ser-193, Ser-197, Ser-202, Ser-207, Ser-617, and Ser-735. Residues 199-210 show a composition bias toward polar residues; the sequence is NRLSPKQSSSDP. A disordered region spans residues 794-827; the sequence is LTQQADSSEDREPHQKRAHSEEPHSPQSKKVRAQ. Thr-795 carries the phosphothreonine modification. Ser-800 bears the Phosphoserine mark. The segment covering 801-817 has biased composition (basic and acidic residues); it reads SEDREPHQKRAHSEEPH. Ser-818 carries the post-translational modification Phosphoserine.

Belongs to the RNase Z family. As to quaternary structure, homodimer. Interacts with PTCD1. Requires Zn(2+) as cofactor.

The protein resides in the mitochondrion. It is found in the mitochondrion matrix. It localises to the mitochondrion nucleoid. Its subcellular location is the nucleus. It carries out the reaction Endonucleolytic cleavage of RNA, removing extra 3' nucleotides from tRNA precursor, generating 3' termini of tRNAs. A 3'-hydroxy group is left at the tRNA terminus and a 5'-phosphoryl group is left at the trailer molecule.. In terms of biological role, zinc phosphodiesterase, which displays mitochondrial tRNA 3'-processing endonuclease activity. Involved in tRNA maturation, by removing a 3'-trailer from precursor tRNA. Associates with mitochondrial DNA complexes at the nucleoids to initiate RNA processing and ribosome assembly. The chain is Zinc phosphodiesterase ELAC protein 2 (Elac2) from Rattus norvegicus (Rat).